Here is a 516-residue protein sequence, read N- to C-terminus: Endoglucanase 17 (516 aa).

Residues 1–29 (MALLLVSSSSSYALRVTIFLSFFFFLCNG) form the signal peptide. Residue aspartate 105 is the Nucleophile of the active site. Residues histidine 433, aspartate 484, and glutamate 493 contribute to the active site.

The protein belongs to the glycosyl hydrolase 9 (cellulase E) family.

Its subcellular location is the secreted. It catalyses the reaction Endohydrolysis of (1-&gt;4)-beta-D-glucosidic linkages in cellulose, lichenin and cereal beta-D-glucans.. The polypeptide is Endoglucanase 17 (Arabidopsis thaliana (Mouse-ear cress)).